A 194-amino-acid chain; its full sequence is Ion-translocating oxidoreductase complex subunit A (194 aa).

The next 6 helical transmembrane spans lie at leucine 4–glycine 24, isoleucine 39–leucine 59, leucine 72–valine 92, valine 102–leucine 122, glycine 135–methionine 155, and alanine 172–isoleucine 192.

It belongs to the NqrDE/RnfAE family. The complex is composed of six subunits: RnfA, RnfB, RnfC, RnfD, RnfE and RnfG.

It localises to the cell inner membrane. In terms of biological role, part of a membrane-bound complex that couples electron transfer with translocation of ions across the membrane. The sequence is that of Ion-translocating oxidoreductase complex subunit A from Azotobacter vinelandii (strain DJ / ATCC BAA-1303).